Here is a 229-residue protein sequence, read N- to C-terminus: Large ribosomal subunit protein uL1 (229 aa).

Belongs to the universal ribosomal protein uL1 family. Part of the 50S ribosomal subunit.

In terms of biological role, binds directly to 23S rRNA. The L1 stalk is quite mobile in the ribosome, and is involved in E site tRNA release. Protein L1 is also a translational repressor protein, it controls the translation of the L11 operon by binding to its mRNA. The chain is Large ribosomal subunit protein uL1 from Thermus thermophilus (strain ATCC BAA-163 / DSM 7039 / HB27).